The primary structure comprises 1064 residues: mRNA 3'-end-processing protein RNA14 (1064 aa).

2 disordered regions span residues 34-106 (ASQS…APSA) and 119-192 (SETP…ASAV). The span at 44–54 (AQDQKSHSTLL) shows a compositional bias: polar residues. Low complexity-rich tracts occupy residues 66-86 (SAIPAAPGSSSTAAASDAIGD) and 151-191 (QPAE…AASA). HAT repeat units follow at residues 327 to 364 (SNFAEVEAIFASTLKGSAGITTAADVSIWAAYLHYIRR), 377 to 412 (DVRSTITEAYEFALRECGFDRESGDIWDEYIKFVAS), 423 to 456 (AKNDNLRKIYQRAVCIPLNNIEALWKSYDNFESS), 673 to 706 (QRGALVAQRRGKDIEELMVGISVVWIMYMRFARR), and 777 to 811 (NDDNNARALFERSVVRIMGDKARPLWDAWARYEYT). 2 disordered regions span residues 888–985 (AVPT…DRSG) and 1022–1064 (LPGA…SGRY). 2 stretches are compositionally biased toward basic and acidic residues: residues 899-910 (SYKRPAPEDIPP) and 933-948 (RYPERDDRPPPGRYRD). The segment covering 1026–1042 (GMPPAPPISRGPPPPPM) has biased composition (pro residues).

The protein resides in the nucleus. The protein localises to the cytoplasm. Component of the cleavage factor IA (CFIA) complex, which is involved in the endonucleolytic cleavage during polyadenylation-dependent pre-mRNA 3'-end formation. The sequence is that of mRNA 3'-end-processing protein RNA14 (RNA14) from Cryptococcus neoformans var. neoformans serotype D (strain B-3501A) (Filobasidiella neoformans).